The sequence spans 296 residues: Small ribosomal subunit protein uS2 (296 aa).

The span at 274 to 284 shows a compositional bias: low complexity; that stretch reads ASSAAPADTWA. The interval 274 to 296 is disordered; that stretch reads ASSAAPADTWAGESGNPDAGVKW.

Belongs to the universal ribosomal protein uS2 family. In terms of assembly, component of the small ribosomal subunit. Mature ribosomes consist of a small (40S) and a large (60S) subunit. The 40S subunit contains about 33 different proteins and 1 molecule of RNA (18S). The 60S subunit contains about 49 different proteins and 3 molecules of RNA (25S, 5.8S and 5S). Interacts with RPS21.

Its subcellular location is the cytoplasm. Its function is as follows. Required for the assembly and/or stability of the 40S ribosomal subunit. Required for the processing of the 20S rRNA-precursor to mature 18S rRNA in a late step of the maturation of 40S ribosomal subunits. In Ajellomyces capsulatus (strain G186AR / H82 / ATCC MYA-2454 / RMSCC 2432) (Darling's disease fungus), this protein is Small ribosomal subunit protein uS2.